A 739-amino-acid polypeptide reads, in one-letter code: MTEQELLSAQTADNAGTDSTERVDAGGMQVAKVLYDFVTEAVLPRVGVDAEKFWSGFAAIARDLTPRNRELLARRDELQMLIDDYHRNNSGTIDQEAYEDFLKEIGYLVEEPEAAEIRTQNVDTEISSTAGPQLVVPILNARFALNAANARWGSLYDALYGTNAIPETDGAEKGKEYNPVRGQKVIEWGREFLDSVVPLDGASHADVEKYNITDGKLAAHIGDSVYRLKNRESYRGFTGNFLDPEAILLETNGLHIELQIDPVHPIGKADKTGLKDIVLESAITTIMDFEDSVAAVDAEDKTLGYSNWFGLNTGELKEEMSKNGRIFTRELNKDRVYIGRNGTELVLHGRSLLFVRNVGHLMQNPSILIDGEEIFEGIMDAVLTTVCAIPGIAPQNKMRNSRKGSIYIVKPKQHGPEEVAFTNELFGRVEDLLDLPRHTLKVGVMDEERRTSVNLDASIMEVADRLAFINTGFLDRTGDEIHTSMEAGAMVRKADMQTAPWKQAYENNNVDAGIQRGLPGKAQIGKGMWAMTELMAEMLEKKIGQPREGANTAWVPSPTGATLHATHYHLVDVFKVQDELRAAGRRDSLRNILTIPTAPNTNWSEEEKKEEMDNNCQSILGYVVRWVEHGVGCSKVPDIHDIDLMEDRATLRISSQMLANWIRHDVVSKEQVLESLERMAVVVDKQNAGDEAYRDMAPNYDASLAFQAAKDLIFEGTKSPSGYTEPILHARRREFKAKN.

Over residues 1-18 (MTEQELLSAQTADNAGTD) the composition is skewed to polar residues. The segment at 1-23 (MTEQELLSAQTADNAGTDSTERV) is disordered. Acetyl-CoA contacts are provided by residues valine 135, 142–143 (RF), serine 292, and arginine 329. Arginine 356 functions as the Proton acceptor in the catalytic mechanism. Residues arginine 356, glutamate 447, and 472-475 (GFLD) each bind glyoxylate. Glutamate 447 and aspartate 475 together coordinate Mg(2+). Proline 556 is an acetyl-CoA binding site. At cysteine 633 the chain carries Cysteine sulfenic acid (-SOH). The active-site Proton donor is the aspartate 647.

Belongs to the malate synthase family. GlcB subfamily. In terms of assembly, monomer. Requires Mg(2+) as cofactor.

The protein localises to the cytoplasm. The catalysed reaction is glyoxylate + acetyl-CoA + H2O = (S)-malate + CoA + H(+). It participates in carbohydrate metabolism; glyoxylate cycle; (S)-malate from isocitrate: step 2/2. Its activity is regulated as follows. Inhibited by oxalate, glycolate and ATP. In terms of biological role, involved in the glycolate utilization. Catalyzes the condensation and subsequent hydrolysis of acetyl-coenzyme A (acetyl-CoA) and glyoxylate to form malate and CoA. This chain is Malate synthase G, found in Corynebacterium glutamicum (strain ATCC 13032 / DSM 20300 / JCM 1318 / BCRC 11384 / CCUG 27702 / LMG 3730 / NBRC 12168 / NCIMB 10025 / NRRL B-2784 / 534).